The sequence spans 279 residues: Cell division protein FtsQ (279 aa).

Residues 1–28 form a disordered region; that stretch reads MTPMKKQLDKSLGSRRGATATRAKERAD. Topologically, residues 1 to 48 are cytoplasmic; it reads MTPMKKQLDKSLGSRRGATATRAKERADNRNTGPAAIVRLLAFIPWNR. The helical transmembrane segment at 49–69 threads the bilayer; that stretch reads VLLHVSIFCFWLLVLSALIAG. Over 70 to 279 the chain is Periplasmic; that stretch reads VKWLDRPVAT…WKADVTPEQG (210 aa). The region spanning 75–144 is the POTRA domain; it reads RPVATVQVVG…DAVQVDLEEE (70 aa).

Belongs to the FtsQ/DivIB family. FtsQ subfamily. Part of a complex composed of FtsB, FtsL and FtsQ.

Its subcellular location is the cell inner membrane. In terms of biological role, essential cell division protein. May link together the upstream cell division proteins, which are predominantly cytoplasmic, with the downstream cell division proteins, which are predominantly periplasmic. May control correct divisome assembly. The chain is Cell division protein FtsQ from Hahella chejuensis (strain KCTC 2396).